The sequence spans 147 residues: Phospholipase A2 SSD387 (147 aa).

The signal sequence occupies residues 1–19 (MSPKFLLFSIIAVWSCAAA). A propeptide spanning residues 20-28 (IEALFIQPR) is cleaved from the precursor. Cystine bridges form between Cys-55–Cys-71, Cys-70–Cys-130, Cys-77–Cys-123, Cys-86–Cys-116, and Cys-109–Cys-121. Ca(2+)-binding residues include Gly-56 and Gly-58. His-74 is a catalytic residue. Asp-75 is a Ca(2+) binding site. Asp-124 is an active-site residue.

The cofactor is Ca(2+). As to expression, expressed by the venom gland.

The protein localises to the secreted. The catalysed reaction is a 1,2-diacyl-sn-glycero-3-phosphocholine + H2O = a 1-acyl-sn-glycero-3-phosphocholine + a fatty acid + H(+). Its function is as follows. PLA2 catalyzes the calcium-dependent hydrolysis of the 2-acyl groups in 3-sn-phosphoglycerides. This is Phospholipase A2 SSD387 from Scolopendra dehaani (Thai centipede).